The primary structure comprises 429 residues: Ribosomal RNA small subunit methyltransferase B (429 aa).

Residues 254–260, aspartate 277, aspartate 303, and aspartate 322 contribute to the S-adenosyl-L-methionine site; that span reads CAAPGGK. Cysteine 375 (nucleophile) is an active-site residue.

Belongs to the class I-like SAM-binding methyltransferase superfamily. RsmB/NOP family.

It is found in the cytoplasm. The catalysed reaction is cytidine(967) in 16S rRNA + S-adenosyl-L-methionine = 5-methylcytidine(967) in 16S rRNA + S-adenosyl-L-homocysteine + H(+). Its function is as follows. Specifically methylates the cytosine at position 967 (m5C967) of 16S rRNA. This is Ribosomal RNA small subunit methyltransferase B from Cronobacter sakazakii (strain ATCC BAA-894) (Enterobacter sakazakii).